Reading from the N-terminus, the 213-residue chain is Protein FAM177A1 (213 aa).

The residue at position 1 (Met1) is an N-acetylmethionine. Ser70 carries the phosphoserine modification. Thr71 is modified (phosphothreonine). The stretch at Ile136–Ile173 forms a coiled coil. The interval Glu147 to Gln175 is disordered. Over residues Gln162–Gln175 the composition is skewed to polar residues.

It belongs to the FAM177 family.

This Homo sapiens (Human) protein is Protein FAM177A1 (FAM177A1).